Consider the following 284-residue polypeptide: 4-diphosphocytidyl-2-C-methyl-D-erythritol kinase (284 aa).

The active site involves Lys-14. Residue 97 to 107 (PMGGGVGGGSS) coordinates ATP. Asp-139 is a catalytic residue.

Belongs to the GHMP kinase family. IspE subfamily.

It carries out the reaction 4-CDP-2-C-methyl-D-erythritol + ATP = 4-CDP-2-C-methyl-D-erythritol 2-phosphate + ADP + H(+). The protein operates within isoprenoid biosynthesis; isopentenyl diphosphate biosynthesis via DXP pathway; isopentenyl diphosphate from 1-deoxy-D-xylulose 5-phosphate: step 3/6. Catalyzes the phosphorylation of the position 2 hydroxy group of 4-diphosphocytidyl-2C-methyl-D-erythritol. This Pseudoalteromonas translucida (strain TAC 125) protein is 4-diphosphocytidyl-2-C-methyl-D-erythritol kinase.